The chain runs to 322 residues: tRNA-modifying protein YgfZ (322 aa).

Residue Trp-182 coordinates folate.

This sequence belongs to the tRNA-modifying YgfZ family.

Its subcellular location is the cytoplasm. In terms of biological role, folate-binding protein involved in regulating the level of ATP-DnaA and in the modification of some tRNAs. It is probably a key factor in regulatory networks that act via tRNA modification, such as initiation of chromosomal replication. In Vibrio parahaemolyticus serotype O3:K6 (strain RIMD 2210633), this protein is tRNA-modifying protein YgfZ.